A 470-amino-acid chain; its full sequence is tRNA-2-methylthio-N(6)-dimethylallyladenosine synthase (470 aa).

Residues 1 to 116 (MTYTVRTYGC…LPALLRRSRH (116 aa)) enclose the MTTase N-terminal domain. Positions 10, 45, 79, 153, 157, and 160 each coordinate [4Fe-4S] cluster. In terms of domain architecture, Radical SAM core spans 139 to 369 (RESNYSAWVS…LDLQNRIALE (231 aa)). One can recognise a TRAM domain in the interval 372–439 (RKLIGKEVEL…PYHLIGDNAL (68 aa)).

Belongs to the methylthiotransferase family. MiaB subfamily. In terms of assembly, monomer. [4Fe-4S] cluster serves as cofactor.

It is found in the cytoplasm. It carries out the reaction N(6)-dimethylallyladenosine(37) in tRNA + (sulfur carrier)-SH + AH2 + 2 S-adenosyl-L-methionine = 2-methylsulfanyl-N(6)-dimethylallyladenosine(37) in tRNA + (sulfur carrier)-H + 5'-deoxyadenosine + L-methionine + A + S-adenosyl-L-homocysteine + 2 H(+). Functionally, catalyzes the methylthiolation of N6-(dimethylallyl)adenosine (i(6)A), leading to the formation of 2-methylthio-N6-(dimethylallyl)adenosine (ms(2)i(6)A) at position 37 in tRNAs that read codons beginning with uridine. The chain is tRNA-2-methylthio-N(6)-dimethylallyladenosine synthase from Tropheryma whipplei (strain Twist) (Whipple's bacillus).